Consider the following 342-residue polypeptide: Autoinducer 2 import system permease protein LsrC (342 aa).

Residues 1–13 (MLKFIQNNREITA) lie on the Periplasmic side of the membrane. A helical transmembrane segment spans residues 14 to 34 (LLAVVLLFVLPGFLDRQYLSV). Residues 35 to 38 (QTLT) are Cytoplasmic-facing. The helical transmembrane segment at 39 to 59 (MVYSSAQILILLAMGATLVML) threads the bilayer. Topologically, residues 60-69 (TRNIDVSVGS) are periplasmic. Residues 70–90 (ITGMCAVLLGMLLNAGYSLPV) form a helical membrane-spanning segment. Residues 91–92 (AC) lie on the Cytoplasmic side of the membrane. The helical transmembrane segment at 93–113 (VTTLLLGLLAGFFNGVLVAWL) threads the bilayer. K114 is a topological domain (periplasmic). A helical membrane pass occupies residues 115-135 (IPAIVATLGTLGLYRGIMLLW). Topologically, residues 136–154 (TGGKWIEGLPAELKQLSAP) are cytoplasmic. The chain crosses the membrane as a helical span at residues 155–175 (LLFGVSAIGWLTIILVAFMAW). At 176–212 (LLAKTAFGRSFYATGDNLQGARQLGVRTEAIRIVAFS) the chain is on the periplasmic side. Residues 213-233 (LNGCMAALAGIVFASQIGFIP) traverse the membrane as a helical segment. The Cytoplasmic portion of the chain corresponds to 234–251 (NQTGTGLEMKAIAACVLG). Residues 252 to 272 (GISLLGGSGAIIGAVLGAWFL) traverse the membrane as a helical segment. Over 273 to 283 (TQIDSVLVLLR) the chain is Periplasmic. A helical membrane pass occupies residues 284 to 304 (IPAWWNDFIAGLVLLAVLVFD). Residues 305-342 (GRLRCALERNLRRQKYARFMTPPPSVKPASSGKKREAA) lie on the Cytoplasmic side of the membrane.

This sequence belongs to the binding-protein-dependent transport system permease family. AraH/RbsC subfamily. As to quaternary structure, the complex is composed of two ATP-binding proteins (LsrA), two transmembrane proteins (LsrC and LsrD) and a solute-binding protein (LsrB).

Its subcellular location is the cell inner membrane. Its function is as follows. Part of the ABC transporter complex LsrABCD involved in autoinducer 2 (AI-2) import. Probably responsible for the translocation of the substrate across the membrane. The chain is Autoinducer 2 import system permease protein LsrC (lsrC) from Escherichia coli O9:H4 (strain HS).